The following is a 202-amino-acid chain: Small ribosomal subunit protein uS4c (202 aa).

The region spanning 90–154 is the S4 RNA-binding domain; the sequence is MRLDNIIFRL…SQSIIIKNLN (65 aa).

It belongs to the universal ribosomal protein uS4 family. As to quaternary structure, part of the 30S ribosomal subunit. Contacts protein S5. The interaction surface between S4 and S5 is involved in control of translational fidelity.

The protein resides in the plastid. Its subcellular location is the chloroplast. In terms of biological role, one of the primary rRNA binding proteins, it binds directly to 16S rRNA where it nucleates assembly of the body of the 30S subunit. Functionally, with S5 and S12 plays an important role in translational accuracy. This Marchantia polymorpha (Common liverwort) protein is Small ribosomal subunit protein uS4c (rps4).